Here is a 322-residue protein sequence, read N- to C-terminus: Tetraacyldisaccharide 4'-kinase (322 aa).

40 to 47 (CVGGTGKT) serves as a coordination point for ATP.

This sequence belongs to the LpxK family.

The catalysed reaction is a lipid A disaccharide + ATP = a lipid IVA + ADP + H(+). Its pathway is glycolipid biosynthesis; lipid IV(A) biosynthesis; lipid IV(A) from (3R)-3-hydroxytetradecanoyl-[acyl-carrier-protein] and UDP-N-acetyl-alpha-D-glucosamine: step 6/6. Functionally, transfers the gamma-phosphate of ATP to the 4'-position of a tetraacyldisaccharide 1-phosphate intermediate (termed DS-1-P) to form tetraacyldisaccharide 1,4'-bis-phosphate (lipid IVA). The protein is Tetraacyldisaccharide 4'-kinase of Koribacter versatilis (strain Ellin345).